Consider the following 436-residue polypeptide: Mannan endo-1,4-beta-mannosidase F (436 aa).

The first 18 residues, 1–18 (MRSLSSVALLSAIGAASA), serve as a signal peptide directing secretion. Residues 19–54 (QAGPWGQCAGISHTGPTTCESGWSCVYLNDWYSQCQ) form the CBM1 domain. The segment at 60–88 (SSSTTVSSTKQPSSTVAAPSSTTSAHTLP) is disordered. The interval 79–113 (SSTTSAHTLPTGSGSFAKTDGLKFNIDGKTKYFAG) is ser-rich linker. Residues 114-436 (TNAYWLPFLT…CAVIDHISQI (323 aa)) are catalytic. Substrate-binding residues include W146 and N260. E261 (proton donor) is an active-site residue. Y336 is a binding site for substrate. E370 functions as the Nucleophile in the catalytic mechanism. W400 serves as a coordination point for substrate.

This sequence belongs to the glycosyl hydrolase 5 (cellulase A) family.

The protein resides in the secreted. The catalysed reaction is Random hydrolysis of (1-&gt;4)-beta-D-mannosidic linkages in mannans, galactomannans and glucomannans.. In terms of biological role, endo-1,4-mannanase, a crucial enzyme for depolymerization of seed galactomannans and wood galactoglucomannans. This chain is Mannan endo-1,4-beta-mannosidase F (manF), found in Aspergillus clavatus (strain ATCC 1007 / CBS 513.65 / DSM 816 / NCTC 3887 / NRRL 1 / QM 1276 / 107).